The following is a 2559-amino-acid chain: Ubiquitin carboxyl-terminal hydrolase 9X (2559 aa).

The span at 1-44 (MTATTRGSPVGGNDNQGQAPDGQSQPPLQQNQTSSPDSSNENSP) shows a compositional bias: polar residues. Residues 1-64 (MTATTRGSPV…DAPPQIEDEE (64 aa)) are disordered. Residues Ser-374, Ser-375, and Ser-588 each carry the phosphoserine modification. Residues 967-999 (QISSNMPSSPDSSSDSSTGSPGNHGNHYSDGPN) form a disordered region. The segment covering 969–989 (SSNMPSSPDSSSDSSTGSPGN) has biased composition (low complexity). The USP domain maps to 1557–1956 (VGLKNAGATC…NAYILFYERM (400 aa)). Cys-1566 (nucleophile) is an active-site residue. Residues 1592–1633 (GSDVDDDMSGDEKQDNESNVDPRDDVFGYPQQFEDKPPLSKT) are disordered. Residue Ser-1600 is modified to Phosphoserine. 2 stretches are compositionally biased toward basic and acidic residues: residues 1601-1617 (GDEK…RDDV) and 1624-1633 (FEDKPPLSKT). 4 residues coordinate Zn(2+): Cys-1727, His-1729, Cys-1771, and Cys-1774. Residue His-1879 is the Proton acceptor of the active site. Ser-2443 is modified (phosphoserine). The span at 2475 to 2484 (PEEEPDDQDA) shows a compositional bias: acidic residues. A disordered region spans residues 2475–2559 (PEEEPDDQDA…QTKGSVKCTY (85 aa)). 2 stretches are compositionally biased toward polar residues: residues 2503-2513 (PGSQYQQNNHV) and 2527-2537 (NNPQRTGQRAQ). The residue at position 2540 (Tyr-2540) is a Phosphotyrosine. A Phosphoserine modification is found at Ser-2547. Thr-2551 is modified (phosphothreonine).

Belongs to the peptidase C19 family. Interacts with SMAD4, MARK4, NUAK1 and BIRC5/survivin. Interacts with DCX. Interacts with OTUD4 and USP7; the interaction is direct. As to expression, highest levels in liver and brain with expression also detected in heart, muscle, spleen and kidney (at protein leve). Ubiquitously expressed in adult tissues.

The protein localises to the cytoplasm. It is found in the cytosol. It localises to the cell projection. The protein resides in the growth cone. Its subcellular location is the cytoskeleton. The protein localises to the cilium axoneme. It catalyses the reaction Thiol-dependent hydrolysis of ester, thioester, amide, peptide and isopeptide bonds formed by the C-terminal Gly of ubiquitin (a 76-residue protein attached to proteins as an intracellular targeting signal).. In terms of biological role, deubiquitinase involved both in the processing of ubiquitin precursors and of ubiquitinated proteins. May therefore play an important regulatory role at the level of protein turnover by preventing degradation of proteins through the removal of conjugated ubiquitin. Specifically hydrolyzes 'Lys-11'-, followed by 'Lys-63'-, 'Lys-48'- and 'Lys-6'-linked polyubiquitins chains. Essential component of TGF-beta/BMP signaling cascade. Specifically deubiquitinates monoubiquitinated SMAD4, opposing the activity of E3 ubiquitin-protein ligase TRIM33. Deubiquitinates alkylation repair enzyme ALKBH3. OTUD4 recruits USP7 and USP9X to stabilize ALKBH3, thereby promoting the repair of alkylated DNA lesions. Deubiquitinates RNA demethylase enzyme ALKBH5, promoting its stability. Deubiquitinates mTORC2 complex component RICTOR at 'Lys-294' by removing 'Lys-63'-linked polyubiquitin chains, stabilizing RICTOR and enhancing its binding to MTOR, thus promoting mTORC2 complex assembly. Regulates chromosome alignment and segregation in mitosis by regulating the localization of BIRC5/survivin to mitotic centromeres. Involved in axonal growth and neuronal cell migration. Regulates cellular clock function by enhancing the protein stability and transcriptional activity of the core circadian protein BMAL1 via its deubiquitinating activity. Acts as a regulator of peroxisome import by mediating deubiquitination of PEX5: specifically deubiquitinates PEX5 monoubiquitinated at 'Cys-11' following its retrotranslocation into the cytosol, resetting PEX5 for a subsequent import cycle. Deubiquitinates PEG10. Inhibits the activation of the Hippo signaling pathway via deubiquitination of AMOTL2 at 'Lys-337' and 'Lys-404' which prohibits its interaction with and activation of LATS2. Loss of LATS2 activation and subsequent loss of YAP1 phosphorylation results in an increase in YAP1-driven transcription of target genes. The sequence is that of Ubiquitin carboxyl-terminal hydrolase 9X from Mus musculus (Mouse).